An 80-amino-acid chain; its full sequence is Lantibiotic Flvalpha.a (80 aa).

Positions 1 to 38 (MNKNPIYRSEEEAKDIACGNVAAELDENSQALDAINGA) are cleaved as a propeptide — cleaved by FlvT. Residues threonine 43 and threonine 47 each carry the 2,3-didehydrobutyrine; by FlvM1 modification. A cross-link (beta-methyllanthionine (Thr-Cys); by FlvM1) is located at residues 52–55 (TVGC). The lanthionine (Ser-Cys); by FlvM1 cross-link spans 58-68 (SYGLGNGGYCC). Cross-links (beta-methyllanthionine (Thr-Cys); by FlvM1) lie at residues 69 to 74 (TYTVEC) and 71 to 78 (TVECSKTC).

Post-translationally, the lanthionine formed by Ser-58 and Cys-68 forms a putative lipid II binding motif. Maturation of FlvA1 peptides involves the enzymatic conversion of Thr, and Ser into dehydrated AA and the formation of thioether bonds with cysteines. Modifications are processed by the flavecin synthetase FlvM1. This is followed by membrane translocation and cleavage of the modified precursor. In terms of processing, contains DL-lanthionine and DL-beta-methyllanthionine, when coepressed in E.coli with the flavecin synthetase FlvM1.

It localises to the secreted. Its function is as follows. Lanthionine-containing peptide antibiotic (lantibiotic) only active on Gram-positive bacteria in synergy with Flvbeta peptides, which are encoded by the same operon than Flvalpha.a. Shows antibacterial activity in synergy with Flvbeta.b, Flvbeta.c, Flvbeta.e and Flvbeta.g. Does not show antibacterial activity when tested with Flvbeta.a, Flvbeta.d, Flvbeta.f and Flvbeta.h. The bactericidal activity of lantibiotics is based on depolarization of energized bacterial cytoplasmic membranes, initiated by the formation of aqueous transmembrane pores. The sequence is that of Lantibiotic Flvalpha.a from Ruminococcus flavefaciens.